The chain runs to 196 residues: UMP-CMP kinase (196 aa).

13–18 (GAGKGT) lines the ATP pocket. S33 carries the post-translational modification Phosphoserine. The tract at residues 33–63 (SAGELLRDERKNPDSQYGELIEKYIKEGKIV) is NMP. R39 contributes to the a ribonucleoside 5'-phosphate binding site. N6-acetyllysine is present on residues K43 and K55. An a ribonucleoside 5'-phosphate-binding site is contributed by 61–63 (KIV). Residue K73 forms a Glycyl lysine isopeptide (Lys-Gly) (interchain with G-Cter in SUMO2) linkage. 93–96 (GFPR) provides a ligand contact to a ribonucleoside 5'-phosphate. N100 provides a ligand contact to CMP. K106 is subject to N6-succinyllysine. Residues 133-143 (ERGKSSGRSDD) are LID. R134 contacts ATP. Residues R140 and R151 each contribute to the a ribonucleoside 5'-phosphate site. K179 lines the ATP pocket. S180 is modified (phosphoserine).

It belongs to the adenylate kinase family. UMP-CMP kinase subfamily. In terms of assembly, monomer. Requires Mg(2+) as cofactor.

It is found in the nucleus. It localises to the cytoplasm. The catalysed reaction is CMP + ATP = CDP + ADP. It catalyses the reaction dCMP + ATP = dCDP + ADP. It carries out the reaction UMP + ATP = UDP + ADP. The enzyme catalyses a 2'-deoxyribonucleoside 5'-diphosphate + ATP = a 2'-deoxyribonucleoside 5'-triphosphate + ADP. The catalysed reaction is a ribonucleoside 5'-diphosphate + ATP = a ribonucleoside 5'-triphosphate + ADP. Catalyzes the phosphorylation of pyrimidine nucleoside monophosphates at the expense of ATP. Plays an important role in de novo pyrimidine nucleotide biosynthesis. Has preference for UMP and CMP as phosphate acceptors. Also displays broad nucleoside diphosphate kinase activity. The polypeptide is UMP-CMP kinase (Cmpk1) (Mus musculus (Mouse)).